The chain runs to 461 residues: Glyceraldehyde-3-phosphate dehydrogenase-like protein (461 aa).

A Phosphothreonine modification is found at threonine 421.

Belongs to the glyceraldehyde-3-phosphate dehydrogenase family.

The protein is Glyceraldehyde-3-phosphate dehydrogenase-like protein (gap2) of Pseudomonas aeruginosa (strain UCBPP-PA14).